Reading from the N-terminus, the 542-residue chain is 4-coumarate--CoA ligase-like 5 (542 aa).

ATP-binding residues include serine 204, serine 205, glycine 206, threonine 207, threonine 208, and lysine 212. Phenylalanine 262 is a (E)-4-coumaroyl-AMP binding site. A CoA-binding site is contributed by arginine 282. The tract at residues aspartate 284–glutamine 353 is SBD1. Residues glycine 331, glutamine 353, glycine 354, and threonine 358 each coordinate (E)-4-coumaroyl-AMP. Residues glutamine 353, glycine 354, threonine 358, aspartate 418, and arginine 433 each coordinate ATP. The interval glycine 354–tyrosine 397 is SBD2. Residues lysine 435 and lysine 439 each coordinate (E)-4-coumaroyl-AMP. Residues lysine 441 and glycine 442 each contribute to the CoA site. Lysine 524 serves as a coordination point for ATP.

Belongs to the ATP-dependent AMP-binding enzyme family. Mg(2+) is required as a cofactor.

It carries out the reaction (E)-4-coumarate + ATP + CoA = (E)-4-coumaroyl-CoA + AMP + diphosphate. The enzyme catalyses (E)-4-coumarate + ATP + H(+) = (E)-4-coumaroyl-AMP + diphosphate. It catalyses the reaction (E)-4-coumaroyl-AMP + CoA = (E)-4-coumaroyl-CoA + AMP + H(+). Carboxylate--CoA ligase that may use 4-coumarate as substrate. Follows a two-step reaction mechanism, wherein the carboxylate substrate first undergoes adenylation by ATP, followed by a thioesterification in the presence of CoA to yield the final CoA thioester. The protein is 4-coumarate--CoA ligase-like 5 (4CLL5) of Oryza sativa subsp. japonica (Rice).